Reading from the N-terminus, the 354-residue chain is NADH-ubiquinone oxidoreductase chain 1 (354 aa).

8 helical membrane-spanning segments follow: residues 43-63, 108-128, 139-159, 180-200, 211-231, 264-284, 298-318, and 334-354; these read LFWS…LTLF, PALF…LWGC, FFWG…GVVL, VISY…VVGS, VSGC…FCVL, IFIA…VLFL, LISS…LIVL, and LIWC…LMII.

The protein belongs to the complex I subunit 1 family.

It localises to the mitochondrion inner membrane. It carries out the reaction a ubiquinone + NADH + 5 H(+)(in) = a ubiquinol + NAD(+) + 4 H(+)(out). Core subunit of the mitochondrial membrane respiratory chain NADH dehydrogenase (Complex I) that is believed to belong to the minimal assembly required for catalysis. Complex I functions in the transfer of electrons from NADH to the respiratory chain. The immediate electron acceptor for the enzyme is believed to be ubiquinone. The sequence is that of NADH-ubiquinone oxidoreductase chain 1 (ND1) from Pecten maximus (King scallop).